We begin with the raw amino-acid sequence, 320 residues long: Beta-ketoacyl-[acyl-carrier-protein] synthase III (320 aa).

Catalysis depends on residues C112 and H245. The interval 246–250 is ACP-binding; that stretch reads QANIR. N275 is an active-site residue.

The protein belongs to the thiolase-like superfamily. FabH family. As to quaternary structure, homodimer.

Its subcellular location is the cytoplasm. It catalyses the reaction malonyl-[ACP] + acetyl-CoA + H(+) = 3-oxobutanoyl-[ACP] + CO2 + CoA. It functions in the pathway lipid metabolism; fatty acid biosynthesis. Functionally, catalyzes the condensation reaction of fatty acid synthesis by the addition to an acyl acceptor of two carbons from malonyl-ACP. Catalyzes the first condensation reaction which initiates fatty acid synthesis and may therefore play a role in governing the total rate of fatty acid production. Possesses both acetoacetyl-ACP synthase and acetyl transacylase activities. Its substrate specificity determines the biosynthesis of branched-chain and/or straight-chain of fatty acids. This is Beta-ketoacyl-[acyl-carrier-protein] synthase III from Streptococcus thermophilus (strain ATCC BAA-250 / LMG 18311).